Consider the following 232-residue polypeptide: Phosphatidylserine decarboxylase proenzyme (232 aa).

S190 (schiff-base intermediate with substrate; via pyruvic acid) is an active-site residue. A Pyruvic acid (Ser); by autocatalysis modification is found at S190.

Belongs to the phosphatidylserine decarboxylase family. PSD-A subfamily. Heterodimer of a large membrane-associated beta subunit and a small pyruvoyl-containing alpha subunit. It depends on pyruvate as a cofactor. Post-translationally, is synthesized initially as an inactive proenzyme. Formation of the active enzyme involves a self-maturation process in which the active site pyruvoyl group is generated from an internal serine residue via an autocatalytic post-translational modification. Two non-identical subunits are generated from the proenzyme in this reaction, and the pyruvate is formed at the N-terminus of the alpha chain, which is derived from the carboxyl end of the proenzyme. The post-translation cleavage follows an unusual pathway, termed non-hydrolytic serinolysis, in which the side chain hydroxyl group of the serine supplies its oxygen atom to form the C-terminus of the beta chain, while the remainder of the serine residue undergoes an oxidative deamination to produce ammonia and the pyruvoyl prosthetic group on the alpha chain.

It localises to the cell membrane. The enzyme catalyses a 1,2-diacyl-sn-glycero-3-phospho-L-serine + H(+) = a 1,2-diacyl-sn-glycero-3-phosphoethanolamine + CO2. Its pathway is phospholipid metabolism; phosphatidylethanolamine biosynthesis; phosphatidylethanolamine from CDP-diacylglycerol: step 2/2. Catalyzes the formation of phosphatidylethanolamine (PtdEtn) from phosphatidylserine (PtdSer). This Bartonella henselae (strain ATCC 49882 / DSM 28221 / CCUG 30454 / Houston 1) (Rochalimaea henselae) protein is Phosphatidylserine decarboxylase proenzyme.